Here is a 516-residue protein sequence, read N- to C-terminus: MGSGQWHMEKRSTLKNDSFVKEYNPVTETGSLSIIVLGASGDLAKKKTFPALFNLFHQGFLNPDEVHIFGYARSKITDEELRDKIRGYLVDEKNASKKTEALSKFLKLIKYVSGPYDSEEGFKRLDKAILEHEISKKTAEGSSRRLFYLALPPSVYPPVSKMIKAWCTNKSDLGGWTRIVVEKPFGKDLESAEQLSSQIGALFEEPQIYRIDHYLGKELVQNMLVLRFANRLFLPLWNRDNIANVQIVFREDFGTEGRGGYFDEYGIIRDIIQNHLLQVLCLVAMEKPISLKPEHIRDEKVKVLQSVIPIKDEEVVLGQYEGYRDDPTVPNDSNTPTFATTILRINNERWEGVPFILKAGKAMSSKKADIRIQFKDVPGDIFKCQNQGRNEFVIRLQPSEAMYMKLTVKQPGLEMQTVQSELDLSYKQRYQDVSIPEAYERLILDTIRGDQQHFVRRDELKAAWEIFTPLLHRIDKGEVKSVPYKQGSRGPAEADQLLKKAGYMQTHGYIWIPPTL.

NADP(+) is bound by residues 38-45 (GASGDLAK), Arg73, Tyr156, and Lys183. D-glucose 6-phosphate-binding positions include Lys183, 213–217 (HYLGK), Glu251, and Asp270. His275 acts as the Proton acceptor in catalysis. Lys358 provides a ligand contact to NADP(+). 2 residues coordinate D-glucose 6-phosphate: Lys361 and Lys366. Residues Lys367, Arg371, and Arg395 each contribute to the NADP(+) site. Gln397 contacts D-glucose 6-phosphate. Residues 403–405 (YMK), 423–425 (DLS), Arg489, and Trp511 each bind NADP(+).

It belongs to the glucose-6-phosphate dehydrogenase family. As to quaternary structure, forms homodimer. Expressed in leaves and stems.

It is found in the cytoplasm. The protein resides in the cytosol. It catalyses the reaction D-glucose 6-phosphate + NADP(+) = 6-phospho-D-glucono-1,5-lactone + NADPH + H(+). It functions in the pathway carbohydrate degradation; pentose phosphate pathway; D-ribulose 5-phosphate from D-glucose 6-phosphate (oxidative stage): step 1/3. With respect to regulation, regulated by metabolites. In terms of biological role, catalyzes the rate-limiting step of the oxidative pentose-phosphate pathway, which represents a route for the dissimilation of carbohydrates besides glycolysis. The main function of this enzyme is to provide reducing power (NADPH) and pentose phosphates for fatty acid and nucleic acid synthesis which are involved in membrane synthesis and cell division. This chain is Glucose-6-phosphate 1-dehydrogenase 5, cytoplasmic, found in Arabidopsis thaliana (Mouse-ear cress).